The sequence spans 404 residues: Dihydroorotase (404 aa).

Zn(2+) contacts are provided by His-57 and His-59. Residues 59–61 and Asn-91 each bind substrate; that span reads HLR. 4 residues coordinate Zn(2+): Lys-135, His-164, His-204, and Asp-272. An N6-carboxylysine modification is found at Lys-135. The active site involves Asp-272. Substrate contacts are provided by residues His-276 and 286–287; that span reads AG.

This sequence belongs to the metallo-dependent hydrolases superfamily. DHOase family. Class I DHOase subfamily. The cofactor is Zn(2+).

It carries out the reaction (S)-dihydroorotate + H2O = N-carbamoyl-L-aspartate + H(+). It participates in pyrimidine metabolism; UMP biosynthesis via de novo pathway; (S)-dihydroorotate from bicarbonate: step 3/3. In terms of biological role, catalyzes the reversible cyclization of carbamoyl aspartate to dihydroorotate. The sequence is that of Dihydroorotase from Pyrococcus abyssi (strain GE5 / Orsay).